The sequence spans 61 residues: Large ribosomal subunit protein eL37 (61 aa).

Zn(2+)-binding residues include C19, C22, C34, and C37. Residues 19–37 (CRRCGRNSFNVRKGYCAAC) form a C4-type zinc finger.

This sequence belongs to the eukaryotic ribosomal protein eL37 family. It depends on Zn(2+) as a cofactor.

Its function is as follows. Binds to the 23S rRNA. This chain is Large ribosomal subunit protein eL37 (rpl37e), found in Sulfurisphaera tokodaii (strain DSM 16993 / JCM 10545 / NBRC 100140 / 7) (Sulfolobus tokodaii).